The chain runs to 295 residues: Ribosomal RNA small subunit methyltransferase A (295 aa).

Residues N31, L33, G58, E79, D104, and N129 each contribute to the S-adenosyl-L-methionine site.

The protein belongs to the class I-like SAM-binding methyltransferase superfamily. rRNA adenine N(6)-methyltransferase family. RsmA subfamily.

It localises to the cytoplasm. It carries out the reaction adenosine(1518)/adenosine(1519) in 16S rRNA + 4 S-adenosyl-L-methionine = N(6)-dimethyladenosine(1518)/N(6)-dimethyladenosine(1519) in 16S rRNA + 4 S-adenosyl-L-homocysteine + 4 H(+). Functionally, specifically dimethylates two adjacent adenosines (A1518 and A1519) in the loop of a conserved hairpin near the 3'-end of 16S rRNA in the 30S particle. May play a critical role in biogenesis of 30S subunits. The sequence is that of Ribosomal RNA small subunit methyltransferase A from Enterococcus faecalis (strain ATCC 700802 / V583).